A 450-amino-acid chain; its full sequence is C4-dicarboxylate transport protein (450 aa).

The next 8 membrane-spanning stretches (helical) occupy residues 25-45 (VVFAIIIGVLLGHFQPEYGAA), 56-76 (LIKMIIAPVIFLTIVTGIASM), 90-110 (MAYFLTFSTLALVVGLVVANV), 162-182 (ILQVLLVAVLFGVSLAMVGDA), 200-220 (LVNIVMKAAPIGAFGAMAFTI), 234-254 (LVLTFYITSAVFVLVVLGAVA), 319-339 (IYMTLAALFIAQATDTHLTLG), and 367-387 (AATLAVVPEVPVAGMALILGV).

It belongs to the dicarboxylate/amino acid:cation symporter (DAACS) (TC 2.A.23) family.

It is found in the cell inner membrane. Functionally, responsible for the transport of dicarboxylates such as succinate, fumarate, and malate from the periplasm across the membrane. This is C4-dicarboxylate transport protein from Acidovorax ebreus (strain TPSY) (Diaphorobacter sp. (strain TPSY)).